The sequence spans 290 residues: Elongation factor Ts (290 aa).

The interval 79 to 82 is involved in Mg(2+) ion dislocation from EF-Tu; sequence TDFV.

The protein belongs to the EF-Ts family.

The protein localises to the cytoplasm. In terms of biological role, associates with the EF-Tu.GDP complex and induces the exchange of GDP to GTP. It remains bound to the aminoacyl-tRNA.EF-Tu.GTP complex up to the GTP hydrolysis stage on the ribosome. This Pseudoalteromonas atlantica (strain T6c / ATCC BAA-1087) protein is Elongation factor Ts.